The sequence spans 970 residues: Protein translocase subunit SecA (970 aa).

ATP is bound by residues glutamine 99, glycine 117–threonine 121, and aspartate 631.

The protein belongs to the SecA family. As to quaternary structure, monomer and homodimer. Part of the essential Sec protein translocation apparatus which comprises SecA, SecYEG and auxiliary proteins SecDF. Other proteins may also be involved.

The protein resides in the cell inner membrane. Its subcellular location is the cytoplasm. It catalyses the reaction ATP + H2O + cellular proteinSide 1 = ADP + phosphate + cellular proteinSide 2.. Its function is as follows. Part of the Sec protein translocase complex. Interacts with the SecYEG preprotein conducting channel. Has a central role in coupling the hydrolysis of ATP to the transfer of proteins into and across the cell membrane, serving as an ATP-driven molecular motor driving the stepwise translocation of polypeptide chains across the membrane. The polypeptide is Protein translocase subunit SecA (Chlamydia pneumoniae (Chlamydophila pneumoniae)).